An 88-amino-acid polypeptide reads, in one-letter code: RNA-binding protein Hfq (88 aa).

Positions 9–68 (DPFLNALRRERIPVSIYLVNGIKLQGQIESFDQFVILLKNTVNQMVYKHAISTVVPARAV) constitute a Sm domain. Residues 66-88 (RAVSHHSASDRPQGERPQEKTEE) form a disordered region. Basic and acidic residues predominate over residues 72 to 88 (SASDRPQGERPQEKTEE).

The protein belongs to the Hfq family. As to quaternary structure, homohexamer.

In terms of biological role, RNA chaperone that binds small regulatory RNA (sRNAs) and mRNAs to facilitate mRNA translational regulation in response to envelope stress, environmental stress and changes in metabolite concentrations. Also binds with high specificity to tRNAs. This Aliivibrio fischeri (strain ATCC 700601 / ES114) (Vibrio fischeri) protein is RNA-binding protein Hfq.